The sequence spans 1146 residues: Ankyrin repeat domain-containing protein 24 (1146 aa).

ANK repeat units lie at residues 81-110, 114-143, 147-176, 180-209, and 213-242; these read EGKS…NVMS, AGYN…VVDV, SGWT…HLNP, SGAT…AAND, and QGRT…QPGI. 3 disordered regions span residues 272–320, 607–627, and 766–785; these read RPSP…PDDR, REME…GAQA, and ERVR…GDTT. A compositionally biased stretch (polar residues) spans 286–297; that stretch reads EASSQNSMSSHG. A coiled-coil region spans residues 320-517; that stretch reads RDAYEEIVRL…QALRQQETRE (198 aa). The stretch at 714–1110 forms a coiled coil; that stretch reads AAEASEKLQV…AARDHSSVVA (397 aa).

In terms of assembly, homodimer. Interacts (via C-terminal domain) with TRIOBP (via C-terminal domain) isoform 4; recruits TRIOBP isoform 4 to stereocilia rootlets.

The protein resides in the cell membrane. It localises to the cell projection. The protein localises to the stereocilium. Component of the stereocilia rootlet in hair cells of inner ear. Bridges the apical plasma membrane with the lower rootlet and maintains normal distribution of TRIOBP, thereby reinforcing stereocilia insertion points and organizing rootlets for hearing with long-term resilience. This is Ankyrin repeat domain-containing protein 24 from Homo sapiens (Human).